The chain runs to 462 residues: A-type ATP synthase subunit B (462 aa).

Belongs to the ATPase alpha/beta chains family. In terms of assembly, has multiple subunits with at least A(3), B(3), C, D, E, F, H, I and proteolipid K(x).

The protein localises to the cell membrane. In terms of biological role, component of the A-type ATP synthase that produces ATP from ADP in the presence of a proton gradient across the membrane. The B chain is a regulatory subunit. This is A-type ATP synthase subunit B from Pyrococcus furiosus (strain ATCC 43587 / DSM 3638 / JCM 8422 / Vc1).